The sequence spans 170 residues: MTDPMTLPYRPNVGIALFNRDGKLFIARRTDLPGDVWQCPQGGIDEGETPQVAALREMGEEIGTQNARILAERSGWLSYDLPSDLIGKALGGRFRGQTQKWFVMGYEGQDSDIRLDLQDPPEFDAWEWVDPQAVLNRNLGFKKALYAELIPELAALFQAAARDWVRTSRA.

Positions 8-151 (PYRPNVGIAL…KKALYAELIP (144 aa)) constitute a Nudix hydrolase domain. The Nudix box signature appears at 42 to 63 (GGIDEGETPQVAALREMGEEIG).

This sequence belongs to the Nudix hydrolase family. RppH subfamily. A divalent metal cation serves as cofactor.

Accelerates the degradation of transcripts by removing pyrophosphate from the 5'-end of triphosphorylated RNA, leading to a more labile monophosphorylated state that can stimulate subsequent ribonuclease cleavage. This is RNA pyrophosphohydrolase from Gluconobacter oxydans (strain 621H) (Gluconobacter suboxydans).